The primary structure comprises 389 residues: (2R)-sulfolactate sulfo-lyase subunit beta (389 aa).

Belongs to the UxaA family. As to quaternary structure, (2R)-sulfolactate sulfo-lyase is composed of a SuyA and a SuyB subunit.

It localises to the cytoplasm. The enzyme catalyses (2R)-3-sulfolactate = sulfite + pyruvate + H(+). Functionally, together with SuyA, desulfonates sulfolactate to pyruvate and sulfite. The protein is (2R)-sulfolactate sulfo-lyase subunit beta (suyB) of Chromohalobacter salexigens (strain ATCC BAA-138 / DSM 3043 / CIP 106854 / NCIMB 13768 / 1H11).